Here is a 369-residue protein sequence, read N- to C-terminus: Anhydro-N-acetylmuramic acid kinase (369 aa).

Position 12-19 (G12–D19) interacts with ATP.

It belongs to the anhydro-N-acetylmuramic acid kinase family.

It catalyses the reaction 1,6-anhydro-N-acetyl-beta-muramate + ATP + H2O = N-acetyl-D-muramate 6-phosphate + ADP + H(+). It participates in amino-sugar metabolism; 1,6-anhydro-N-acetylmuramate degradation. The protein operates within cell wall biogenesis; peptidoglycan recycling. In terms of biological role, catalyzes the specific phosphorylation of 1,6-anhydro-N-acetylmuramic acid (anhMurNAc) with the simultaneous cleavage of the 1,6-anhydro ring, generating MurNAc-6-P. Is required for the utilization of anhMurNAc either imported from the medium or derived from its own cell wall murein, and thus plays a role in cell wall recycling. In Escherichia coli (strain K12 / MC4100 / BW2952), this protein is Anhydro-N-acetylmuramic acid kinase.